The chain runs to 182 residues: Crossover junction endodeoxyribonuclease RuvC (182 aa).

Catalysis depends on residues Asp-7, Glu-69, and Asp-141. Residues Asp-7, Glu-69, and Asp-141 each coordinate Mg(2+).

Belongs to the RuvC family. Homodimer which binds Holliday junction (HJ) DNA. The HJ becomes 2-fold symmetrical on binding to RuvC with unstacked arms; it has a different conformation from HJ DNA in complex with RuvA. In the full resolvosome a probable DNA-RuvA(4)-RuvB(12)-RuvC(2) complex forms which resolves the HJ. Requires Mg(2+) as cofactor.

The protein localises to the cytoplasm. It carries out the reaction Endonucleolytic cleavage at a junction such as a reciprocal single-stranded crossover between two homologous DNA duplexes (Holliday junction).. The RuvA-RuvB-RuvC complex processes Holliday junction (HJ) DNA during genetic recombination and DNA repair. Endonuclease that resolves HJ intermediates. Cleaves cruciform DNA by making single-stranded nicks across the HJ at symmetrical positions within the homologous arms, yielding a 5'-phosphate and a 3'-hydroxyl group; requires a central core of homology in the junction. The consensus cleavage sequence is 5'-(A/T)TT(C/G)-3'. Cleavage occurs on the 3'-side of the TT dinucleotide at the point of strand exchange. HJ branch migration catalyzed by RuvA-RuvB allows RuvC to scan DNA until it finds its consensus sequence, where it cleaves and resolves the cruciform DNA. The sequence is that of Crossover junction endodeoxyribonuclease RuvC from Paracidovorax citrulli (strain AAC00-1) (Acidovorax citrulli).